Here is a 181-residue protein sequence, read N- to C-terminus: TATA-box-binding protein C (181 aa).

Repeat copies occupy residues 5–83 and 99–177.

The protein belongs to the TBP family.

General factor that plays a role in the activation of archaeal genes transcribed by RNA polymerase. Binds specifically to the TATA box promoter element which lies close to the position of transcription initiation. The sequence is that of TATA-box-binding protein C (tbpC1) from Halobacterium salinarum (strain ATCC 700922 / JCM 11081 / NRC-1) (Halobacterium halobium).